Reading from the N-terminus, the 248-residue chain is Phosphomannomutase (248 aa).

The active-site Nucleophile is the Asp-12. 2 residues coordinate Mg(2+): Asp-12 and Asp-14. The active-site Proton donor/acceptor is the Asp-14. Arg-21, Arg-123, Arg-134, Arg-141, Ser-179, and Asp-181 together coordinate alpha-D-mannose 1-phosphate. Positions 207, 219, and 224 each coordinate Mg(2+).

Belongs to the eukaryotic PMM family. Homodimer. Mg(2+) is required as a cofactor.

The protein resides in the cytoplasm. The catalysed reaction is alpha-D-mannose 1-phosphate = D-mannose 6-phosphate. It functions in the pathway nucleotide-sugar biosynthesis; GDP-alpha-D-mannose biosynthesis; alpha-D-mannose 1-phosphate from D-fructose 6-phosphate: step 2/2. In terms of biological role, catalyzes the interconversion of mannose-6-phosphate to mannose-1-phosphate, the precursor for the synthesis of GDP-mannose. GDP-mannose is an essential sugar nucleotide for the synthesis of D-mannose-containing cell wall polysaccharides (galactomannans and glucomannans), glycolipids, glycoproteins and the antioxidant L-ascorbate. This chain is Phosphomannomutase, found in Spinacia oleracea (Spinach).